The chain runs to 107 residues: MSTPHADAQLNAADDLGIDSSAASAYDTPLGITNPPIDELLSRASSKYALVIYAAKRARQINDYYNQLGDGILEYVGPLVEPGLQEKPLSIALREIHGDLLEHTEGE.

The protein belongs to the RNA polymerase subunit omega family. In terms of assembly, the RNAP catalytic core consists of 2 alpha, 1 beta, 1 beta' and 1 omega subunit. When a sigma factor is associated with the core the holoenzyme is formed, which can initiate transcription.

It catalyses the reaction RNA(n) + a ribonucleoside 5'-triphosphate = RNA(n+1) + diphosphate. Promotes RNA polymerase assembly. Latches the N- and C-terminal regions of the beta' subunit thereby facilitating its interaction with the beta and alpha subunits. This Mycolicibacterium smegmatis (strain ATCC 700084 / mc(2)155) (Mycobacterium smegmatis) protein is DNA-directed RNA polymerase subunit omega.